The following is a 94-amino-acid chain: Integration host factor subunit beta (94 aa).

Belongs to the bacterial histone-like protein family. As to quaternary structure, heterodimer of an alpha and a beta chain.

Functionally, this protein is one of the two subunits of integration host factor, a specific DNA-binding protein that functions in genetic recombination as well as in transcriptional and translational control. The protein is Integration host factor subunit beta of Caulobacter sp. (strain K31).